Consider the following 401-residue polypeptide: Tryptophan synthase beta chain (401 aa).

Lys92 is modified (N6-(pyridoxal phosphate)lysine).

It belongs to the TrpB family. Tetramer of two alpha and two beta chains. The cofactor is pyridoxal 5'-phosphate.

The catalysed reaction is (1S,2R)-1-C-(indol-3-yl)glycerol 3-phosphate + L-serine = D-glyceraldehyde 3-phosphate + L-tryptophan + H2O. The protein operates within amino-acid biosynthesis; L-tryptophan biosynthesis; L-tryptophan from chorismate: step 5/5. Its function is as follows. The beta subunit is responsible for the synthesis of L-tryptophan from indole and L-serine. This Ruthia magnifica subsp. Calyptogena magnifica protein is Tryptophan synthase beta chain.